Reading from the N-terminus, the 431-residue chain is 3-phosphoshikimate 1-carboxyvinyltransferase (431 aa).

K21, S22, and R26 together coordinate 3-phosphoshikimate. K21 is a phosphoenolpyruvate binding site. Positions 93 and 122 each coordinate phosphoenolpyruvate. Residues S167, Q169, D318, and K345 each coordinate 3-phosphoshikimate. Residue Q169 participates in phosphoenolpyruvate binding. Catalysis depends on D318, which acts as the Proton acceptor. Positions 349 and 391 each coordinate phosphoenolpyruvate.

It belongs to the EPSP synthase family. Monomer.

It localises to the cytoplasm. The catalysed reaction is 3-phosphoshikimate + phosphoenolpyruvate = 5-O-(1-carboxyvinyl)-3-phosphoshikimate + phosphate. The protein operates within metabolic intermediate biosynthesis; chorismate biosynthesis; chorismate from D-erythrose 4-phosphate and phosphoenolpyruvate: step 6/7. Functionally, catalyzes the transfer of the enolpyruvyl moiety of phosphoenolpyruvate (PEP) to the 5-hydroxyl of shikimate-3-phosphate (S3P) to produce enolpyruvyl shikimate-3-phosphate and inorganic phosphate. In Roseiflexus castenholzii (strain DSM 13941 / HLO8), this protein is 3-phosphoshikimate 1-carboxyvinyltransferase.